The chain runs to 225 residues: Heptaprenylglyceryl phosphate synthase (225 aa).

K6 contributes to the sn-glycerol 1-phosphate binding site. Mg(2+)-binding residues include D8 and T34. Sn-glycerol 1-phosphate contacts are provided by residues 153–158 (YVEYSG), G183, and 203–204 (GN).

Belongs to the GGGP/HepGP synthase family. Group I subfamily. In terms of assembly, homodimer. Requires Mg(2+) as cofactor.

The catalysed reaction is sn-glycerol 1-phosphate + all-trans-heptaprenyl diphosphate = 3-heptaprenyl-sn-glycero-1-phosphate + diphosphate. It participates in membrane lipid metabolism; glycerophospholipid metabolism. In terms of biological role, prenyltransferase that catalyzes in vivo the transfer of the heptaprenyl moiety of heptaprenyl pyrophosphate (HepPP; 35 carbon atoms) to the C3 hydroxyl of sn-glycerol-1-phosphate (G1P), producing heptaprenylglyceryl phosphate (HepGP). This reaction is an ether-bond-formation step in the biosynthesis of archaea-type G1P-based membrane lipids found in Bacillales. To a much lesser extent, is also able to use geranylgeranyl diphosphate (GGPP; C20) as the prenyl donor. This is Heptaprenylglyceryl phosphate synthase from Listeria monocytogenes serovar 1/2a (strain ATCC BAA-679 / EGD-e).